A 162-amino-acid polypeptide reads, in one-letter code: Cyclic pyranopterin monophosphate synthase (162 aa).

Substrate contacts are provided by residues 75–77 and 113–114; these read LCH and ME. Residue D128 is part of the active site.

This sequence belongs to the MoaC family. As to quaternary structure, homohexamer; trimer of dimers.

It catalyses the reaction (8S)-3',8-cyclo-7,8-dihydroguanosine 5'-triphosphate = cyclic pyranopterin phosphate + diphosphate. It participates in cofactor biosynthesis; molybdopterin biosynthesis. Catalyzes the conversion of (8S)-3',8-cyclo-7,8-dihydroguanosine 5'-triphosphate to cyclic pyranopterin monophosphate (cPMP). This Burkholderia cenocepacia (strain HI2424) protein is Cyclic pyranopterin monophosphate synthase.